The chain runs to 94 residues: CRISPR-associated endoribonuclease Cas2 1 (94 aa).

Asp-8 is a binding site for Mg(2+).

It belongs to the CRISPR-associated endoribonuclease Cas2 protein family. As to quaternary structure, homodimer, forms a heterotetramer with a Cas1 homodimer. It depends on Mg(2+) as a cofactor.

Functionally, CRISPR (clustered regularly interspaced short palindromic repeat), is an adaptive immune system that provides protection against mobile genetic elements (viruses, transposable elements and conjugative plasmids). CRISPR clusters contain sequences complementary to antecedent mobile elements and target invading nucleic acids. CRISPR clusters are transcribed and processed into CRISPR RNA (crRNA). Involved in the integration of spacer DNA into the CRISPR cassette. Functions as a ssRNA-specific endoribonuclease. This Archaeoglobus fulgidus (strain ATCC 49558 / DSM 4304 / JCM 9628 / NBRC 100126 / VC-16) protein is CRISPR-associated endoribonuclease Cas2 1 (cas21).